The following is a 326-amino-acid chain: tRNA-modifying protein YgfZ (326 aa).

Residues W27 and W189 each contribute to the folate site.

The protein belongs to the tRNA-modifying YgfZ family.

The protein localises to the cytoplasm. Folate-binding protein involved in regulating the level of ATP-DnaA and in the modification of some tRNAs. It is probably a key factor in regulatory networks that act via tRNA modification, such as initiation of chromosomal replication. The sequence is that of tRNA-modifying protein YgfZ from Escherichia coli O17:K52:H18 (strain UMN026 / ExPEC).